Reading from the N-terminus, the 339-residue chain is Histidine protein methyltransferase 1 (339 aa).

Phosphoserine is present on residues serine 333 and serine 338.

Belongs to the methyltransferase superfamily. METTL18 family.

It localises to the cytoplasm. The protein resides in the nucleus. The catalysed reaction is L-histidyl-[protein] + S-adenosyl-L-methionine = N(tele)-methyl-L-histidyl-[protein] + S-adenosyl-L-homocysteine + H(+). Its function is as follows. Protein-histidine N-methyltransferase that mediates methylation of target protein on His residues. The chain is Histidine protein methyltransferase 1 from Schizosaccharomyces pombe (strain 972 / ATCC 24843) (Fission yeast).